Reading from the N-terminus, the 684-residue chain is Endo-1,4-beta-xylanase A (684 aa).

Residues 1–34 (MMRSLKSRKLVFILAMLFLINAIVSLKFITYSSA) form the signal peptide. CBM-cenC domains are found at residues 40–190 (KSKY…IKDL) and 193–342 (AYVL…ISDE). Positions 350–678 (DYNLPSLCEK…KFAFWSLIDP (329 aa)) constitute a GH10 domain. Glu-490 functions as the Proton donor in the catalytic mechanism. Glu-598 serves as the catalytic Nucleophile.

It belongs to the glycosyl hydrolase 10 (cellulase F) family.

The catalysed reaction is Endohydrolysis of (1-&gt;4)-beta-D-xylosidic linkages in xylans.. It participates in glycan degradation; xylan degradation. This Caldicellulosiruptor sp. (strain Rt8B.4) protein is Endo-1,4-beta-xylanase A (xynA).